The sequence spans 69 residues: uncharacterized protein (69 aa).

The signal sequence occupies residues 1–18 (MAMLWISMFIIMRKYGRS). Residues 17 to 69 (RSSSSSSSSSSSSSSSSSSSSSSSSSSSSSSSSSSSSSSSSGSSSNSNRVVVV) form a disordered region. Positions 18-61 (SSSSSSSSSSSSSSSSSSSSSSSSSSSSSSSSSSSSSSSSGSSS) are enriched in low complexity.

It localises to the secreted. This is an uncharacterized protein from Dictyostelium discoideum (Social amoeba).